Consider the following 352-residue polypeptide: Ferredoxin--NADP reductase 2 (352 aa).

The FAD site is built by glutamate 36, lysine 44, tyrosine 48, isoleucine 88, leucine 123, aspartate 290, and serine 331.

Belongs to the ferredoxin--NADP reductase type 2 family. Homodimer. The cofactor is FAD.

It carries out the reaction 2 reduced [2Fe-2S]-[ferredoxin] + NADP(+) + H(+) = 2 oxidized [2Fe-2S]-[ferredoxin] + NADPH. This is Ferredoxin--NADP reductase 2 from Exiguobacterium sibiricum (strain DSM 17290 / CCUG 55495 / CIP 109462 / JCM 13490 / 255-15).